The following is an 82-amino-acid chain: Mu-conotoxin MrVIA (82 aa).

A signal peptide spans 1-22; that stretch reads MKLTCMMIVAVLFLTAWTLVMA. Positions 23 to 49 are excised as a propeptide; it reads DDSNNGLANHFSKSRDEMEDPEASKLE. 3 disulfides stabilise this stretch: cysteine 53–cysteine 71, cysteine 60–cysteine 76, and cysteine 70–cysteine 81.

As to expression, expressed by the venom duct.

It is found in the secreted. Its function is as follows. MuO-conotoxins are gating-modifier toxins that inhibit sodium current by trapping the domain II voltage sensor in the closed position to prevent opening of the sodium channel. This toxin inhibits rNav1.2/SCN2A (IC(50)=532 nM), rNav1.4/SCN4A (IC(50)=438 nM) and rNav1.7/SCN9A (IC(50)=345 nM). It blocks Nav channels by interacting mainly with the C-terminal part of the pore loop of domain-3. It does not bind on site 1. At small concentration, this toxin also acts as a calcium current agonist, whereas at higher doses it blocks fast-inactivating calcium current. The protein is Mu-conotoxin MrVIA of Conus marmoreus (Marble cone).